We begin with the raw amino-acid sequence, 89 residues long: Small ribosomal subunit protein uS15 (89 aa).

The protein belongs to the universal ribosomal protein uS15 family. Part of the 30S ribosomal subunit. Forms a bridge to the 50S subunit in the 70S ribosome, contacting the 23S rRNA.

One of the primary rRNA binding proteins, it binds directly to 16S rRNA where it helps nucleate assembly of the platform of the 30S subunit by binding and bridging several RNA helices of the 16S rRNA. In terms of biological role, forms an intersubunit bridge (bridge B4) with the 23S rRNA of the 50S subunit in the ribosome. The polypeptide is Small ribosomal subunit protein uS15 (Marinobacter nauticus (strain ATCC 700491 / DSM 11845 / VT8) (Marinobacter aquaeolei)).